A 239-amino-acid polypeptide reads, in one-letter code: Tetraspanin-9 (239 aa).

Transmembrane regions (helical) follow at residues 14-34, 56-76, and 86-106; these read FLFNLIFWLCGCGLLGVGIWL, LVIAIGTIVMVTGFLGCLGAI, and FFIVLLIILLAELILIILFFV. 2 N-linked (GlcNAc...) asparagine glycosylation sites follow: N180 and N181. The helical transmembrane segment at 204 to 224 threads the bilayer; sequence VLGTVGMCLLITQILGMAFSM.

Belongs to the tetraspanin (TM4SF) family. Found in a complex with GP6. In terms of processing, glycosylated.

The protein localises to the membrane. The polypeptide is Tetraspanin-9 (TSPAN9) (Ovis aries (Sheep)).